Consider the following 337-residue polypeptide: tRNA(Ile)-lysidine synthase (337 aa).

40–45 (SGGQDS) provides a ligand contact to ATP.

It belongs to the tRNA(Ile)-lysidine synthase family.

It is found in the cytoplasm. It catalyses the reaction cytidine(34) in tRNA(Ile2) + L-lysine + ATP = lysidine(34) in tRNA(Ile2) + AMP + diphosphate + H(+). In terms of biological role, ligates lysine onto the cytidine present at position 34 of the AUA codon-specific tRNA(Ile) that contains the anticodon CAU, in an ATP-dependent manner. Cytidine is converted to lysidine, thus changing the amino acid specificity of the tRNA from methionine to isoleucine. The chain is tRNA(Ile)-lysidine synthase from Parasynechococcus marenigrum (strain WH8102).